The sequence spans 537 residues: Quadr-hydrophobin (537 aa).

Positions 1–17 (MKFITVAAALFASTSLA) are cleaved as a signal peptide. 4 hydrophobin regions span residues 63-199 (GGNP…QNPI), 200-299 (GGNP…ENPT), 300-421 (GGNP…QDPL), and 422-537 (GGNP…RAII). N-linked (GlcNAc...) asparagine glycosylation is found at Asn-70 and Asn-113. 16 disulfide bridges follow: Cys-134/Cys-183, Cys-144/Cys-174, Cys-145/Cys-157, Cys-184/Cys-195, Cys-234/Cys-283, Cys-244/Cys-274, Cys-245/Cys-257, Cys-284/Cys-295, Cys-356/Cys-405, Cys-366/Cys-396, Cys-367/Cys-379, Cys-406/Cys-417, Cys-471/Cys-520, Cys-481/Cys-511, Cys-482/Cys-494, and Cys-521/Cys-532.

Belongs to the cerato-ulmin hydrophobin family. Homotetramer. Further self-assembles to form highly ordered films at water-air interfaces through intermolecular interactions.

Its subcellular location is the secreted. It is found in the cell wall. Its function is as follows. Aerial growth, conidiation, and dispersal of filamentous fungi in the environment rely upon a capability of their secreting small amphipathic proteins called hydrophobins (HPBs) with low sequence identity. Class I can self-assemble into an outermost layer of rodlet bundles on aerial cell surfaces, conferring cellular hydrophobicity that supports fungal growth, development and dispersal; whereas Class II form highly ordered films at water-air interfaces through intermolecular interactions but contribute nothing to the rodlet structure. The sequence is that of Quadr-hydrophobin from Cordyceps militaris (Caterpillar fungus).